Consider the following 186-residue polypeptide: 3-hydroxyanthranilate 3,4-dioxygenase (186 aa).

Arginine 44 serves as a coordination point for O2. Positions 48, 54, and 96 each coordinate Fe cation. A substrate-binding site is contributed by glutamate 54. Residues arginine 100 and glutamate 110 each coordinate substrate. Residues cysteine 125, cysteine 130, cysteine 164, and cysteine 167 each contribute to the a divalent metal cation site.

The protein belongs to the 3-HAO family. It depends on Fe(2+) as a cofactor.

The protein resides in the cytoplasm. It catalyses the reaction 3-hydroxyanthranilate + O2 = (2Z,4Z)-2-amino-3-carboxymuconate 6-semialdehyde. It functions in the pathway cofactor biosynthesis; NAD(+) biosynthesis; quinolinate from L-kynurenine: step 3/3. Functionally, catalyzes the oxidative ring opening of 3-hydroxyanthranilate to 2-amino-3-carboxymuconate semialdehyde, which spontaneously cyclizes to quinolinate. This Chaetomium globosum (strain ATCC 6205 / CBS 148.51 / DSM 1962 / NBRC 6347 / NRRL 1970) (Soil fungus) protein is 3-hydroxyanthranilate 3,4-dioxygenase.